The chain runs to 166 residues: Macrocypin-5a (166 aa).

The segment at 20 to 39 is disordered; sequence NIPGGMYASSKDGKDEPVTA.

It belongs to the protease inhibitor I85 family.

Inhibits papain and cysteine cathepsin endopeptidases, and also inhibits cathepsins B and H, which exhibit both exopeptidase and endopeptidase activities. The protein is Macrocypin-5a of Macrolepiota procera (Parasol mushroom).